An 814-amino-acid polypeptide reads, in one-letter code: Valine--tRNA ligase (814 aa).

The 'HIGH' region motif lies at 46–56; the sequence is PTVSGQLHIGH. A 'KMSKS' region motif is present at residues 536-540; sequence KMSKS. Lys539 is an ATP binding site.

The protein belongs to the class-I aminoacyl-tRNA synthetase family. ValS type 2 subfamily. Monomer.

The protein resides in the cytoplasm. The catalysed reaction is tRNA(Val) + L-valine + ATP = L-valyl-tRNA(Val) + AMP + diphosphate. Functionally, catalyzes the attachment of valine to tRNA(Val). As ValRS can inadvertently accommodate and process structurally similar amino acids such as threonine, to avoid such errors, it has a 'posttransfer' editing activity that hydrolyzes mischarged Thr-tRNA(Val) in a tRNA-dependent manner. This Rickettsia prowazekii (strain Madrid E) protein is Valine--tRNA ligase.